The chain runs to 282 residues: Phosphatidylserine decarboxylase proenzyme (282 aa).

Residues aspartate 88, histidine 145, and serine 248 each act as charge relay system; for autoendoproteolytic cleavage activity in the active site. Serine 248 (schiff-base intermediate with substrate; via pyruvic acid; for decarboxylase activity) is an active-site residue. At serine 248 the chain carries Pyruvic acid (Ser); by autocatalysis.

It belongs to the phosphatidylserine decarboxylase family. PSD-B subfamily. Prokaryotic type I sub-subfamily. In terms of assembly, heterodimer of a large membrane-associated beta subunit and a small pyruvoyl-containing alpha subunit. Pyruvate serves as cofactor. Is synthesized initially as an inactive proenzyme. Formation of the active enzyme involves a self-maturation process in which the active site pyruvoyl group is generated from an internal serine residue via an autocatalytic post-translational modification. Two non-identical subunits are generated from the proenzyme in this reaction, and the pyruvate is formed at the N-terminus of the alpha chain, which is derived from the carboxyl end of the proenzyme. The autoendoproteolytic cleavage occurs by a canonical serine protease mechanism, in which the side chain hydroxyl group of the serine supplies its oxygen atom to form the C-terminus of the beta chain, while the remainder of the serine residue undergoes an oxidative deamination to produce ammonia and the pyruvoyl prosthetic group on the alpha chain. During this reaction, the Ser that is part of the protease active site of the proenzyme becomes the pyruvoyl prosthetic group, which constitutes an essential element of the active site of the mature decarboxylase.

Its subcellular location is the cell membrane. The enzyme catalyses a 1,2-diacyl-sn-glycero-3-phospho-L-serine + H(+) = a 1,2-diacyl-sn-glycero-3-phosphoethanolamine + CO2. It participates in phospholipid metabolism; phosphatidylethanolamine biosynthesis; phosphatidylethanolamine from CDP-diacylglycerol: step 2/2. In terms of biological role, catalyzes the formation of phosphatidylethanolamine (PtdEtn) from phosphatidylserine (PtdSer). The chain is Phosphatidylserine decarboxylase proenzyme from Dechloromonas aromatica (strain RCB).